A 486-amino-acid chain; its full sequence is uncharacterized protein (486 aa).

This is an uncharacterized protein from Methanocaldococcus jannaschii (strain ATCC 43067 / DSM 2661 / JAL-1 / JCM 10045 / NBRC 100440) (Methanococcus jannaschii).